Consider the following 705-residue polypeptide: Ovotransferrin (705 aa).

Positions 1 to 19 (MKLILCTVLSLGIAAVCFA) are cleaved as a signal peptide. Transferrin-like domains lie at 26-352 (IRWC…SMRK) and 364-689 (IQWC…SLKT). 2 disulfides stabilise this stretch: C29/C64 and C39/C55. Fe(3+) contacts are provided by D79 and Y111. 4 cysteine pairs are disulfide-bonded: C134–C216, C179–C193, C190–C201, and C247–C261. Hydrogencarbonate is bound by residues T136, R140, A142, and G143. Y210 lines the Fe(3+) pocket. H269 is a binding site for Fe(3+). The tract at residues 352 to 360 (KDQLTPSPR) is connecting region. Intrachain disulfides connect C367/C399 and C377/C390. The Fe(3+) site is built by D414 and Y450. 7 disulfides stabilise this stretch: C424/C699, C440/C662, C473/C549, C497/C690, C507/C521, C518/C532, and C589/C603. Hydrogencarbonate is bound by residues T475, R479, A481, and G482. N492 carries N-linked (GlcNAc...) asparagine glycosylation. Y543 provides a ligand contact to Fe(3+). H611 lines the Fe(3+) pocket.

It belongs to the transferrin family. Monomer. Different forms of hen transferrin are distinguished by their carbohydrate composition. Ovotransferrin and embryo serum transferrin but not adult serum transferrin, have bisecting N-acetylglucosamine. Transferrin secreted by embryo hepatocytes in primary culture is marked by the presence of (alpha1-6) fucosylation of the core N-acetylglucosamine. Serum transferrins also differ in the number of attached neuraminic acid residues. In both embryo forms, sialylation occurs on the Man (alpha 1-3)-linked antennae. As to expression, expressed in the magnum of the oviduct (at protein level).

Its subcellular location is the secreted. In terms of biological role, transferrins are iron binding transport proteins which can bind two Fe(3+) ions in association with the binding of an anion, usually bicarbonate. Responsible for the transport of iron from sites of absorption and heme degradation to those of storage and utilization. There are two forms of hen transferrin, ovotransferrin, found in the ovoducts and, serum transferrin, secreted by the liver. Serum transferrin may also have a role in stimulating cell proliferation and is regulated by iron levels. Ovotransferrin has a bacteriostatic function and, is not controlled by iron levels. The polypeptide is Ovotransferrin (Gallus gallus (Chicken)).